A 358-amino-acid chain; its full sequence is Probable (S)-tetrahydroprotoberberine N-methyltransferase 2 (358 aa).

S-adenosyl-L-methionine is bound by residues Ser-98, Gly-136, Asn-160, Gln-164, Asp-186, Val-187, and Ile-202. Cys-333 is a catalytic residue.

It belongs to the CFA/CMAS family. As to quaternary structure, homodimer.

It is found in the cytoplasm. It catalyses the reaction (S)-stylopine + S-adenosyl-L-methionine = (S)-cis-N-methylstylopine + S-adenosyl-L-homocysteine. The enzyme catalyses (S)-tetrahydropalmatine + S-adenosyl-L-methionine = (S)-cis-N-methyltetrahydropalmatine + S-adenosyl-L-homocysteine. It functions in the pathway alkaloid biosynthesis. In terms of biological role, N-methyltransferase with a strict substrate specificity for (R,S)-tetrahydropalmatine or (R,S)-stylopine. The chain is Probable (S)-tetrahydroprotoberberine N-methyltransferase 2 from Papaver bracteatum (Great scarlet poppy).